We begin with the raw amino-acid sequence, 99 residues long: Aspartyl/glutamyl-tRNA(Asn/Gln) amidotransferase subunit C (99 aa).

The protein belongs to the GatC family. As to quaternary structure, heterotrimer of A, B and C subunits.

The enzyme catalyses L-glutamyl-tRNA(Gln) + L-glutamine + ATP + H2O = L-glutaminyl-tRNA(Gln) + L-glutamate + ADP + phosphate + H(+). The catalysed reaction is L-aspartyl-tRNA(Asn) + L-glutamine + ATP + H2O = L-asparaginyl-tRNA(Asn) + L-glutamate + ADP + phosphate + 2 H(+). In terms of biological role, allows the formation of correctly charged Asn-tRNA(Asn) or Gln-tRNA(Gln) through the transamidation of misacylated Asp-tRNA(Asn) or Glu-tRNA(Gln) in organisms which lack either or both of asparaginyl-tRNA or glutaminyl-tRNA synthetases. The reaction takes place in the presence of glutamine and ATP through an activated phospho-Asp-tRNA(Asn) or phospho-Glu-tRNA(Gln). The chain is Aspartyl/glutamyl-tRNA(Asn/Gln) amidotransferase subunit C from Bifidobacterium longum (strain NCC 2705).